A 338-amino-acid polypeptide reads, in one-letter code: UPF0284 protein TV0153 (338 aa).

Belongs to the UPF0284 family.

The sequence is that of UPF0284 protein TV0153 from Thermoplasma volcanium (strain ATCC 51530 / DSM 4299 / JCM 9571 / NBRC 15438 / GSS1).